A 189-amino-acid polypeptide reads, in one-letter code: Der GTPase-activating protein YihI (189 aa).

A disordered region spans residues 1–81 (MARKKKTRRV…ALAKKDPRLG (81 aa)). Composition is skewed to basic and acidic residues over residues 9 to 27 (RVSD…ELPK) and 35 to 46 (TRYELDAKARED). Polar residues predominate over residues 60–71 (RHSATENNNNHQ).

This sequence belongs to the YihI family. In terms of assembly, interacts with Der.

In terms of biological role, a GTPase-activating protein (GAP) that modifies Der/EngA GTPase function. May play a role in ribosome biogenesis. In Pasteurella multocida (strain Pm70), this protein is Der GTPase-activating protein YihI.